The sequence spans 493 residues: Glutamyl-tRNA(Gln) amidotransferase subunit A (493 aa).

Catalysis depends on charge relay system residues Lys-78 and Ser-158. The Acyl-ester intermediate role is filled by Ser-182.

The protein belongs to the amidase family. GatA subfamily. As to quaternary structure, heterotrimer of A, B and C subunits.

The catalysed reaction is L-glutamyl-tRNA(Gln) + L-glutamine + ATP + H2O = L-glutaminyl-tRNA(Gln) + L-glutamate + ADP + phosphate + H(+). Functionally, allows the formation of correctly charged Gln-tRNA(Gln) through the transamidation of misacylated Glu-tRNA(Gln) in organisms which lack glutaminyl-tRNA synthetase. The reaction takes place in the presence of glutamine and ATP through an activated gamma-phospho-Glu-tRNA(Gln). This chain is Glutamyl-tRNA(Gln) amidotransferase subunit A, found in Azorhizobium caulinodans (strain ATCC 43989 / DSM 5975 / JCM 20966 / LMG 6465 / NBRC 14845 / NCIMB 13405 / ORS 571).